A 462-amino-acid polypeptide reads, in one-letter code: Chromosomal replication initiator protein DnaA (462 aa).

Positions 1-84 (MAVSLWQQCI…RFDIGSRPSA (84 aa)) are domain I, interacts with DnaA modulators. The domain II stretch occupies residues 84–125 (ARTVQPAPAAPRPTTGHTQTKARVGTAFNIQAEPMANANHRS). Residues 126–342 (NINPTYQFDN…GALNRVIANA (217 aa)) form a domain III, AAA+ region region. ATP is bound by residues G170, G172, K173, and T174. The segment at 343–462 (NFTGRPITID…YANLIRTLSS (120 aa)) is domain IV, binds dsDNA.

This sequence belongs to the DnaA family. Oligomerizes as a right-handed, spiral filament on DNA at oriC.

The protein localises to the cytoplasm. In terms of biological role, plays an essential role in the initiation and regulation of chromosomal replication. ATP-DnaA binds to the origin of replication (oriC) to initiate formation of the DNA replication initiation complex once per cell cycle. Binds the DnaA box (a 9 base pair repeat at the origin) and separates the double-stranded (ds)DNA. Forms a right-handed helical filament on oriC DNA; dsDNA binds to the exterior of the filament while single-stranded (ss)DNA is stabiized in the filament's interior. The ATP-DnaA-oriC complex binds and stabilizes one strand of the AT-rich DNA unwinding element (DUE), permitting loading of DNA polymerase. After initiation quickly degrades to an ADP-DnaA complex that is not apt for DNA replication. Binds acidic phospholipids. This chain is Chromosomal replication initiator protein DnaA, found in Shewanella denitrificans (strain OS217 / ATCC BAA-1090 / DSM 15013).